A 266-amino-acid polypeptide reads, in one-letter code: Aspartate/glutamate leucyltransferase (266 aa).

The protein belongs to the R-transferase family. Bpt subfamily.

Its subcellular location is the cytoplasm. The enzyme catalyses N-terminal L-glutamyl-[protein] + L-leucyl-tRNA(Leu) = N-terminal L-leucyl-L-glutamyl-[protein] + tRNA(Leu) + H(+). It carries out the reaction N-terminal L-aspartyl-[protein] + L-leucyl-tRNA(Leu) = N-terminal L-leucyl-L-aspartyl-[protein] + tRNA(Leu) + H(+). Functions in the N-end rule pathway of protein degradation where it conjugates Leu from its aminoacyl-tRNA to the N-termini of proteins containing an N-terminal aspartate or glutamate. This Rhizorhabdus wittichii (strain DSM 6014 / CCUG 31198 / JCM 15750 / NBRC 105917 / EY 4224 / RW1) (Sphingomonas wittichii) protein is Aspartate/glutamate leucyltransferase.